The chain runs to 483 residues: Glutamyl-tRNA(Gln) amidotransferase subunit A (483 aa).

Active-site charge relay system residues include Lys75 and Ser150. Ser174 acts as the Acyl-ester intermediate in catalysis.

It belongs to the amidase family. GatA subfamily. In terms of assembly, heterotrimer of A, B and C subunits.

It catalyses the reaction L-glutamyl-tRNA(Gln) + L-glutamine + ATP + H2O = L-glutaminyl-tRNA(Gln) + L-glutamate + ADP + phosphate + H(+). In terms of biological role, allows the formation of correctly charged Gln-tRNA(Gln) through the transamidation of misacylated Glu-tRNA(Gln) in organisms which lack glutaminyl-tRNA synthetase. The reaction takes place in the presence of glutamine and ATP through an activated gamma-phospho-Glu-tRNA(Gln). The sequence is that of Glutamyl-tRNA(Gln) amidotransferase subunit A from Microcystis aeruginosa (strain NIES-843 / IAM M-2473).